The chain runs to 333 residues: Methionyl-tRNA formyltransferase (333 aa).

(6S)-5,6,7,8-tetrahydrofolate is bound at residue 106-109; sequence SLLP.

It belongs to the Fmt family.

The enzyme catalyses L-methionyl-tRNA(fMet) + (6R)-10-formyltetrahydrofolate = N-formyl-L-methionyl-tRNA(fMet) + (6S)-5,6,7,8-tetrahydrofolate + H(+). Functionally, attaches a formyl group to the free amino group of methionyl-tRNA(fMet). The formyl group appears to play a dual role in the initiator identity of N-formylmethionyl-tRNA by promoting its recognition by IF2 and preventing the misappropriation of this tRNA by the elongation apparatus. The polypeptide is Methionyl-tRNA formyltransferase (Elusimicrobium minutum (strain Pei191)).